We begin with the raw amino-acid sequence, 428 residues long: Cyclic AMP-responsive element-binding protein 3-like protein 4 (428 aa).

The interval M1–N68 is required for transcriptional activation. Residues M1–S294 lie on the Cytoplasmic side of the membrane. Residues Y71–V111 are disordered. One can recognise a bZIP domain in the interval I216–L279. The tract at residues K218–R247 is basic motif. Residues L258–L279 form a leucine-zipper region. A helical; Signal-anchor for type II membrane protein transmembrane segment spans residues T295–F315. The Lumenal portion of the chain corresponds to R316–M428. Positions N339–M428 are disordered. Over residues T354 to R368 the composition is skewed to basic and acidic residues. N418 carries an N-linked (GlcNAc...) asparagine glycan.

The protein belongs to the bZIP family. ATF subfamily. As to quaternary structure, binds DNA as a dimer. Post-translationally, controlled by regulated intramembrane proteolysis (RIP). A fragment containing the cytoplasmic transcription factor domain is released by proteolysis. The cleavage seems to be performed sequentially by site-1 and site-2 proteases (PS1 and PS2).

It is found in the endoplasmic reticulum membrane. It localises to the nucleus. In terms of biological role, transcriptional activator. This is Cyclic AMP-responsive element-binding protein 3-like protein 4 (creb3l4) from Xenopus tropicalis (Western clawed frog).